A 381-amino-acid chain; its full sequence is MSQFFEAATPVAIPTNNTNGGSSDAGSAATGGAPVVGTTAQPTINHRLLLSLKEAAKIIGTKGSTISRIRAANSVKIGISEKVPGCSDRILSCAGNVINVANAIGDIVDVLNKRNPENEDAAEGEAEEHYYFHFLNHILPAPSKDEIRDLQQLEDIGYVRLIVANSHISSIIGKAGATIKSLINKHGVKIVASKDFLPASDERIIEIQGFPGSITNVLIEISEIILSDVDVRFSTERSYFPHLKKSSGEPTSPSTSSNTRIELKIPELYVGAIIGRGMNRIKNLKTFTKTNIVVERKDDDDKDENFRKFIITSKFPKNVKLAESMLLKNLNTEIEKRENYKRKLEAAEVDATVVTERSDSASFLEEKEEPQKNHDNKEEQS.

The tract at residues 1–34 (MSQFFEAATPVAIPTNNTNGGSSDAGSAATGGAP) is disordered. Residues 15–33 (TNNTNGGSSDAGSAATGGA) show a composition bias toward low complexity. KH domains lie at 43 to 107 (TINH…IGDI), 156 to 221 (IGYV…LIEI), and 258 to 326 (NTRI…ESML). The interval 357–381 (RSDSASFLEEKEEPQKNHDNKEEQS) is disordered. Phosphoserine is present on residues Ser358, Ser360, and Ser362. Residues 369 to 381 (EPQKNHDNKEEQS) are compositionally biased toward basic and acidic residues.

It belongs to the HEK2 family. In terms of assembly, binds RNA. Phosphorylated by the plasma membrane-Anchored casein kinase YCK1. Phosphorylation at its C-terminus reduces its RNA-binding capacity.

The protein localises to the cytoplasm. It localises to the P-body. The protein resides in the nucleus. It is found in the chromosome. Its subcellular location is the telomere. RNA-binding protein involved in the correct localization of transcripts in the cell. RNA localization is a widespread mechanism for achieving localized protein synthesis. Required for the asymmetric localization to the daughter cell nucleus of the ASH1 transcript, coding for a specific repressor of transcription. Overexpression inhibits translation of the ASH1 transcript. Involved in the stability of transcripts, like the MTL1 mRNA. Involved in structural and functional organization of telomeric chromatin and regulates silencing at the HMR locus. This is Heterogeneous nuclear rnp K-like protein 2 (HEK2) from Saccharomyces cerevisiae (strain RM11-1a) (Baker's yeast).